The sequence spans 194 residues: Leucyl/phenylalanyl-tRNA--protein transferase (194 aa).

Belongs to the L/F-transferase family.

The protein localises to the cytoplasm. It carries out the reaction N-terminal L-lysyl-[protein] + L-leucyl-tRNA(Leu) = N-terminal L-leucyl-L-lysyl-[protein] + tRNA(Leu) + H(+). The enzyme catalyses N-terminal L-arginyl-[protein] + L-leucyl-tRNA(Leu) = N-terminal L-leucyl-L-arginyl-[protein] + tRNA(Leu) + H(+). It catalyses the reaction L-phenylalanyl-tRNA(Phe) + an N-terminal L-alpha-aminoacyl-[protein] = an N-terminal L-phenylalanyl-L-alpha-aminoacyl-[protein] + tRNA(Phe). Functions in the N-end rule pathway of protein degradation where it conjugates Leu, Phe and, less efficiently, Met from aminoacyl-tRNAs to the N-termini of proteins containing an N-terminal arginine or lysine. The polypeptide is Leucyl/phenylalanyl-tRNA--protein transferase (Chlorobium phaeobacteroides (strain DSM 266 / SMG 266 / 2430)).